A 75-amino-acid chain; its full sequence is UPF0154 protein MYPE400 (75 aa).

Residues 5–27 (IGLCLGLGIPISLIIGAVIGYYF) traverse the membrane as a helical segment.

The protein belongs to the UPF0154 family.

The protein resides in the membrane. The sequence is that of UPF0154 protein MYPE400 from Malacoplasma penetrans (strain HF-2) (Mycoplasma penetrans).